The primary structure comprises 191 residues: dCTP deaminase (191 aa).

DCTP-binding positions include 112–117, 136–138, Gln-157, Tyr-173, and Gln-183; these read KSTYAR and TLE. Glu-138 acts as the Proton donor/acceptor in catalysis.

Belongs to the dCTP deaminase family. Homotrimer.

It carries out the reaction dCTP + H2O + H(+) = dUTP + NH4(+). It functions in the pathway pyrimidine metabolism; dUMP biosynthesis; dUMP from dCTP (dUTP route): step 1/2. In terms of biological role, catalyzes the deamination of dCTP to dUTP. The sequence is that of dCTP deaminase from Xylella fastidiosa (strain 9a5c).